The chain runs to 643 residues: Lysophospholipase ARB_05919 (643 aa).

An N-terminal signal peptide occupies residues 1 to 22; sequence MMFIPATLGTFVLASLLPATVG. One can recognise a PLA2c domain in the interval 50-597; the sequence is DCPSTKPAVR…KMYCWDGTLN (548 aa). N142, N176, N195, N293, N466, N472, N482, N503, N524, N533, N552, and N597 each carry an N-linked (GlcNAc...) asparagine glycan.

The protein belongs to the lysophospholipase family.

Its subcellular location is the secreted. The catalysed reaction is a 1-acyl-sn-glycero-3-phosphocholine + H2O = sn-glycerol 3-phosphocholine + a fatty acid + H(+). Functionally, catalyzes the release of fatty acids from lysophospholipids. Phospholipase B may well contribute to pathogenicity by abetting the fungus in damaging host cell membranes. The sequence is that of Lysophospholipase ARB_05919 from Arthroderma benhamiae (strain ATCC MYA-4681 / CBS 112371) (Trichophyton mentagrophytes).